We begin with the raw amino-acid sequence, 362 residues long: RNA-binding protein 4 (362 aa).

RRM domains follow at residues 2–72 (VKLF…ASKN) and 78–148 (TKLH…LSTS). Lysine 79 participates in a covalent cross-link: Glycyl lysine isopeptide (Lys-Gly) (interchain with G-Cter in SUMO2). Serine 86 is subject to Phosphoserine. Lysine 92 is covalently cross-linked (Glycyl lysine isopeptide (Lys-Gly) (interchain with G-Cter in SUMO2)). Residues 160-177 (SGCYRCGKEGHWSKECPV) form a CCHC-type zinc finger. Positions 196-362 (AVRTPYTMGY…YADRARYSAF (167 aa)) are interaction with TNPO3. A disordered region spans residues 306–336 (RSPLRRATGPVPTVGEGYGYGHESELSQGSS). A Phosphoserine modification is found at serine 307.

As to quaternary structure, interacts with TNPO3; the interaction mediates nuclear import of the protein and is disrupted by nuclear Ran bound to GTP. Interacts with EIF4G1 and WT1. Interacts with EIF4A1; the interaction is modulated under stress-induced conditions. Interacts with AGO1. Interacts with AGO2; the interaction occurs under both cell proliferation and differentiation conditions and in an RNA- and phosphorylation-independent manner. Interacts with DDX5; the interaction occurs in an RNA-independent manner. Interacts with RBPMS; the interaction allows cooperative assembly of RNA-bound stable cell-specific alternative splicing regulatory complexes. In terms of processing, phosphorylated. Phosphorylated in vitro on Ser-307 by SRPK1. Phosphorylation on Ser-307 is induced upon cell stress signaling, which alters its subcellular localization and may modulate its activity on IRES-mediated mRNA translation. Phosphorylation on Ser-307 is induced upon cell muscle differentiation.

It localises to the nucleus. The protein resides in the nucleolus. The protein localises to the nucleus speckle. It is found in the cytoplasm. Its subcellular location is the cytoplasmic granule. Functionally, RNA-binding factor involved in multiple aspects of cellular processes like alternative splicing of pre-mRNA and translation regulation. Modulates alternative 5'-splice site and exon selection. Acts as a muscle cell differentiation-promoting factor. Activates exon skipping of the PTB pre-mRNA during muscle cell differentiation. Antagonizes the activity of the splicing factor PTBP1 to modulate muscle cell-specific exon selection of alpha tropomyosin. Binds to intronic pyrimidine-rich sequence of the TPM1 and MAPT pre-mRNAs. Required for the translational activation of PER1 mRNA in response to circadian clock. Binds directly to the 3'-UTR of the PER1 mRNA. Exerts a suppressive activity on Cap-dependent translation via binding to CU-rich responsive elements within the 3'UTR of mRNAs, a process increased under stress conditions or during myocytes differentiation. Recruits EIF4A1 to stimulate IRES-dependent translation initiation in respons to cellular stress. Associates to internal ribosome entry segment (IRES) in target mRNA species under stress conditions. Plays a role for miRNA-guided RNA cleavage and translation suppression by promoting association of AGO2-containing miRNPs with their cognate target mRNAs. Associates with miRNAs during muscle cell differentiation. Binds preferentially to 5'-CGCGCG[GCA]-3' motif in vitro. The chain is RNA-binding protein 4 (RBM4) from Bos taurus (Bovine).